A 685-amino-acid polypeptide reads, in one-letter code: Amino acid transporter heavy chain SLC3A1 (685 aa).

Residues 1–10 (MDEDKGKRDP) show a composition bias toward basic and acidic residues. The interval 1-53 (MDEDKGKRDPIQMSLKGCRTNNGFVQNEDIPEQDPDPGSRDTPQPNAVSIPAP) is disordered. Residues 1 to 88 (MDEDKGKRDP…ARYRVPREIL (88 aa)) lie on the Cytoplasmic side of the membrane. A helical; Signal-anchor for type II membrane protein transmembrane segment spans residues 89 to 109 (FWLTVVSVFLLIGATIAIIVI). Residues 110-685 (SPKCLDWWQA…SALDILYSSC (576 aa)) lie on the Extracellular side of the membrane. Asparagine 213 provides a ligand contact to Ca(2+). Asparagine 213, asparagine 240, and asparagine 260 each carry an N-linked (GlcNAc...) asparagine glycan. Residues cysteine 241 and cysteine 272 are joined by a disulfide bond. The Ca(2+) site is built by aspartate 283, phenylalanine 317, leucine 318, and glutamate 320. Asparagine 331 carries N-linked (GlcNAc...) asparagine glycosylation. Phosphoserine is present on serine 385. N-linked (GlcNAc...) asparagine glycans are attached at residues asparagine 512 and asparagine 522. Intrachain disulfides connect cysteine 570/cysteine 666 and cysteine 673/cysteine 685.

Disulfide-linked heterodimer composed of the catalytic light subunit SLC7A9 and the heavy subunit SLC3A1. The heterodimer is the minimal functional unit. Assembles in non-covalently linked heterotetramers (dimers of heterodimers) and higher order oligomers; the oligomerization is mediated by SLC3A1 likely to prevent degradation in the endoplasmic reticulum and facilitate heteromer trafficking to the plasma membrane. Disulfide-linked heterodimer composed of the catalytic light subunit SLC7A13 and the heavy subunit SLC3A1. As to expression, expressed in the brush border membrane in the kidney (at protein level). Highly expressed in renal tubules in the outer stripe of the outer medulla and medullary ray (at protein level). Also detected in the renal cortex. More abundant in male than female kidneys.

It localises to the cell membrane. The protein resides in the apical cell membrane. In terms of biological role, acts as a chaperone that facilitates biogenesis and trafficking of functional transporter heteromers to the plasma membrane. Associates with SLC7A9 to form a functional transporter complex that mediates the electrogenic exchange between cationic amino acids and neutral amino acids, with a stoichiometry of 1:1. SLC7A9-SLC3A1 transporter has system b(0,+)-like activity with high affinity for extracellular cationic amino acids and L-cystine and lower affinity for intracellular neutral amino acids. Substrate exchange is driven by high concentration of intracellular neutral amino acids and the intracellular reduction of L-cystine to L-cysteine. SLC7A9-SLC3A1 acts as a major transporter for reabsorption of L-cystine and dibasic amino acids across the brush border membrane in early proximal tubules. Associates with SLC7A13 to form a functional complex that transports anionic and neutral amino acids via exchange or facilitated diffusion. SLC7A13-SLC3A1 may act as a major transporter for L-cystine in late proximal tubules, ensuring its reabsorption from the luminal fluid in exchange for cytosolic L-glutamate or L-aspartate. The polypeptide is Amino acid transporter heavy chain SLC3A1 (Mus musculus (Mouse)).